A 413-amino-acid polypeptide reads, in one-letter code: Phosphatidylcholine:ceramide cholinephosphotransferase 1 (413 aa).

An SAM domain is found at W7–E70. S8 is subject to Phosphoserine. 5 helical membrane passes run F136–V156, F184–L204, F215–L235, M276–I296, and L304–L324. H285 is a catalytic residue. Residues A325–T413 are Cytoplasmic-facing. Residues H328 and D332 contribute to the active site.

Belongs to the sphingomyelin synthase family. Brain, heart, kidney, liver, muscle and stomach.

It is found in the golgi apparatus membrane. It carries out the reaction an N-acylsphing-4-enine + a 1,2-diacyl-sn-glycero-3-phosphocholine = a sphingomyelin + a 1,2-diacyl-sn-glycerol. The catalysed reaction is an N-acylsphinganine + a 1,2-diacyl-sn-glycero-3-phosphocholine = an N-acylsphinganine-1-phosphocholine + a 1,2-diacyl-sn-glycerol. It catalyses the reaction an N-acyl-(4R)-4-hydroxysphinganine + a 1,2-diacyl-sn-glycero-3-phosphocholine = an N-acyl-(4R)-4-hydroxysphinganine-phosphocholine + a 1,2-diacyl-sn-glycerol. The enzyme catalyses 1-(9Z-octadecenoyl)-2-acyl-sn-3-glycerol + a sphingomyelin = a 1-(9Z-octadecenoyl)-2-acyl-sn-glycero-3-phosphocholine + an N-acylsphing-4-enine. It carries out the reaction N-hexadecanoylsphinganine + a 1,2-diacyl-sn-glycero-3-phosphocholine = N-hexadecanoyl-sphinganine-1-phosphocholine + a 1,2-diacyl-sn-glycerol. The catalysed reaction is N-hexadecanoyl-(4R)-hydroxysphinganine + a 1,2-diacyl-sn-glycero-3-phosphocholine = N-hexadecanoyl-(4R)-hydroxysphinganine-phosphocholine + a 1,2-diacyl-sn-glycerol. It catalyses the reaction an N-acylsphing-4-enine + a 1,2-diacyl-sn-glycero-3-phosphoethanolamine = an N-acylsphing-4-enine 1-phosphoethanolamine + a 1,2-diacyl-sn-glycerol. The protein operates within sphingolipid metabolism. With respect to regulation, inhibited by bacterial PC-phospholipase C inhibitor D609. Functionally, major sphingomyelin synthase at the Golgi apparatus. Catalyzes the reversible transfer of phosphocholine moiety in sphingomyelin biosynthesis: in the forward reaction transfers phosphocholine head group of phosphatidylcholine (PC) on to ceramide (CER) to form ceramide phosphocholine (sphingomyelin, SM) and diacylglycerol (DAG) as by-product, and in the reverse reaction transfers phosphocholine from SM to DAG to form PC and CER. The direction of the reaction depends on the levels of CER and DAG in Golgi membranes. Converts the newly synthesized CER, that is transported from the endoplasmic reticulum to the trans-Golgi by the Cer transport protein (CERT), to SM. Can form a heteromeric complex with glucosylceramide synthase (GCS) increasing SMS activity and reducing glucosylceramide synthesis, a critical mechanism that controls the metabolic fate of CER in the Golgi. Does not use free phosphorylcholine or CDP-choline as donor. Can also transfer phosphoethanolamine head group of phosphatidylethanolamine (PE) on to CER to form ceramide phosphoethanolamine (CPE). Regulates receptor-mediated signal transduction via mitogenic DAG and proapoptotic CER, as well as via SM, a structural component of membrane rafts that serve as platforms for signal transduction and protein sorting. Plays a role in secretory transport via regulation of DAG pool at the Golgi apparatus and its downstream effects on PRKD1. This chain is Phosphatidylcholine:ceramide cholinephosphotransferase 1 (SGMS1), found in Homo sapiens (Human).